The following is a 202-amino-acid chain: MNWYVRLLQKYPYRMAVTSTSSLFMIGDCVSQRYFSDKPYEPMRTARAGIYACAFAPAMTAWFRFLGQQQLPVIAKVAIDQAVFAPSSIGYYFSVMGLLEGKSPDTIWQSLKNQYWDTLKCGWMIWPAFQLFNFGIVPPNFRVLASNCCGLVWNTFLAYQNANKMEKGHVADLVIEEVKEEVKEVKQEVLAEVKVIKGFVKQ.

A run of 4 helical transmembrane segments spans residues 15–31 (MAVT…DCVS), 48–66 (AGIY…FRFL), 82–99 (AVFA…MGLL), and 143–159 (VLAS…FLAY).

The protein belongs to the peroxisomal membrane protein PXMP2/4 family.

Its subcellular location is the mitochondrion inner membrane. May be involved in cellular response to stress. Required to maintain mitochondrial DNA (mtDNA) integrity and stability. The polypeptide is Protein SYM1 (SYM1) (Yarrowia lipolytica (strain CLIB 122 / E 150) (Yeast)).